Reading from the N-terminus, the 330-residue chain is Mucin-15 (330 aa).

The signal sequence occupies residues 1 to 23 (MLTSAKILLISILSSLLLFGSHG). Residues 23-115 (GEEGQKTNTT…SPRSPSTHSF (93 aa)) form a disordered region. Topologically, residues 24–232 (EEGQKTNTTE…SDPQEENRNT (209 aa)) are extracellular. Residues Asn30, Asn44, Asn54, Asn71, Asn79, Asn89, Asn94, Asn122, Asn138, Asn147, Asn154, Asn162, Asn175, Asn214, and Asn221 are each glycosylated (N-linked (GlcNAc...) asparagine). Residues 42-56 (MENQSVPLESKANLT) are compositionally biased toward polar residues. Positions 86–115 (FYSNLSTDNSSRSPSLMPTLSPRSPSTHSF) are enriched in polar residues. Residues 164-185 (SITVSNLPSGPNTTSVTPMVTE) form a disordered region. A helical transmembrane segment spans residues 233 to 253 (GVVFGAILGAILGASLLSLVG). Over 254 to 330 (YLLCGKRKTD…DDIPPLRTSV (77 aa)) the chain is Cytoplasmic. A disordered region spans residues 279-330 (LRLDNAPEPYDMSFGNSSYYNPTANDSSTSAGGENAHDSIPMDDIPPLRTSV). Positions 292 to 310 (FGNSSYYNPTANDSSTSAG) are enriched in polar residues.

In terms of processing, highly glycosylated (N- and O-linked carbohydrates). As to expression, mainly expressed on apical surfaces of the mammary epithelial cells.

It is found in the cell membrane. It localises to the secreted. This is Mucin-15 (MUC15) from Bos taurus (Bovine).